The primary structure comprises 355 residues: 1D-myo-inositol 2-acetamido-2-deoxy-alpha-D-glucopyranoside deacetylase 3 (355 aa).

Residues H31, D34, and H169 each contribute to the Zn(2+) site.

It belongs to the MshB deacetylase family. The cofactor is Zn(2+).

It carries out the reaction 1D-myo-inositol 2-acetamido-2-deoxy-alpha-D-glucopyranoside + H2O = 1D-myo-inositol 2-amino-2-deoxy-alpha-D-glucopyranoside + acetate. In terms of biological role, catalyzes the deacetylation of 1D-myo-inositol 2-acetamido-2-deoxy-alpha-D-glucopyranoside (GlcNAc-Ins) in the mycothiol biosynthesis pathway. This Catenulispora acidiphila (strain DSM 44928 / JCM 14897 / NBRC 102108 / NRRL B-24433 / ID139908) protein is 1D-myo-inositol 2-acetamido-2-deoxy-alpha-D-glucopyranoside deacetylase 3.